The following is a 1828-amino-acid chain: Proteasome activator complex subunit 4 (1828 aa).

6 HEAT repeats span residues 462 to 506 (PEGP…LVDC), 985 to 1024 (NFCC…NHGG), 1164 to 1202 (YVLP…QLKR), 1339 to 1377 (DAFL…GSKH), 1621 to 1659 (PVQV…YNLF), and 1665 to 1703 (EESV…CNFL). The tract at residues 1635 to 1723 (ARSSSWHARY…EALCKTRLPK (89 aa)) is bromodomain-like (BRDL).

The protein belongs to the BLM10 family. In terms of assembly, homodimer. Interacts with the 20S and 26S proteasomes.

Its subcellular location is the cytoplasm. It localises to the cytosol. The protein localises to the nucleus. The protein resides in the nucleus speckle. Associated component of the proteasome that specifically recognizes acetylated histones and promotes ATP- and ubiquitin-independent degradation of core histones during DNA damage response. Recognizes and binds acetylated histones via its bromodomain-like (BRDL) region and activates the proteasome by opening the gated channel for substrate entry. Binds to the core proteasome via its C-terminus, which occupies the same binding sites as the proteasomal ATPases, opening the closed structure of the proteasome via an active gating mechanism. involved in DNA damage response in somatic cells: binds to acetylated histones and promotes degradation of histones. In Xenopus laevis (African clawed frog), this protein is Proteasome activator complex subunit 4 (psme4).